Reading from the N-terminus, the 320-residue chain is Heterogeneous nuclear ribonucleoprotein A1 (320 aa).

Methionine 1 is subject to N-acetylmethionine. N-acetylserine; in Heterogeneous nuclear ribonucleoprotein A1, N-terminally processed is present on serine 2. A Phosphoserine modification is found at serine 2. Lysine 3 carries the N6-acetyllysine; alternate modification. Lysine 3 is covalently cross-linked (Glycyl lysine isopeptide (Lys-Gly) (interchain with G-Cter in SUMO2); alternate). A phosphoserine mark is found at serine 4 and serine 6. The tract at residues 4–94 (SESPKEPEQL…EPKRAVSRED (91 aa)) is globular A domain. A Glycyl lysine isopeptide (Lys-Gly) (interchain with G-Cter in SUMO2) cross-link involves residue lysine 8. RRM domains lie at 14–97 (RKLF…DSQR) and 105–184 (KKIF…LSKQ). Serine 22 carries the phosphoserine modification. A Glycyl lysine isopeptide (Lys-Gly) (interchain with G-Cter in SUMO2) cross-link involves residue lysine 78. Residues 95–185 (SQRPGAHLTV…EVRKALSKQE (91 aa)) form a globular B domain region. Lysine 113 is covalently cross-linked (Glycyl lysine isopeptide (Lys-Gly) (interchain with G-Cter in SUMO)). Residues lysine 179 and lysine 183 each participate in a glycyl lysine isopeptide (Lys-Gly) (interchain with G-Cter in SUMO2) cross-link. Residues 182–216 (SKQEMASASSSQRGRSGSGNFGGGRGGGFGGNDNF) form a disordered region. The residue at position 192 (serine 192) is a Phosphoserine; by MKNK2. Arginine 194 is modified (asymmetric dimethylarginine; alternate). Dimethylated arginine; alternate is present on arginine 194. Position 194 is an omega-N-methylarginine; alternate (arginine 194). Gly residues predominate over residues 197-216 (SGSGNFGGGRGGGFGGNDNF). Phosphoserine is present on serine 199. Asymmetric dimethylarginine; alternate is present on residues arginine 206, arginine 218, arginine 225, and arginine 232. Arginine 206 is subject to Dimethylated arginine; alternate. Arginine 206, arginine 218, arginine 225, and arginine 232 each carry omega-N-methylarginine; alternate. The segment at 218–240 (RGGNFSGRGGFGGSRGGGGYGGS) is RNA-binding RGG-box. Arginine 225 is modified (dimethylated arginine; alternate). The nuclear targeting sequence stretch occupies residues 268–305 (NQSSNFGPMKGGNFGGRSSGPYGGGGQYFAKPRNQGGY). Residues 274–320 (GPMKGGNFGGRSSGPYGGGGQYFAKPRNQGGYGGSSSSSSYGSGRRF) form a disordered region. Over residues 276 to 294 (MKGGNFGGRSSGPYGGGGQ) the composition is skewed to gly residues. Arginine 284 carries the post-translational modification Omega-N-methylarginine. Serine 285 is modified (phosphoserine). Lysine 298 bears the N6-acetyllysine; alternate mark. Lysine 298 is covalently cross-linked (Glycyl lysine isopeptide (Lys-Gly) (interchain with G-Cter in SUMO2); alternate). Arginine 300 carries the post-translational modification Omega-N-methylarginine. Low complexity predominate over residues 308–320 (SSSSSSYGSGRRF). Serine 309 bears the Phosphoserine mark. Serine 310, serine 311, and serine 312 each carry phosphoserine; by MKNK2. Phosphoserine is present on residues serine 313 and serine 316. Arginine 318 carries the post-translational modification Omega-N-methylarginine.

Identified in the spliceosome C complex. Identified in a IGF2BP1-dependent mRNP granule complex containing untranslated mRNAs. Interacts with SEPT6. Interacts with C9orf72. Interacts with KHDRBS1. Interacts with UBQLN2. Interacts with PPIA/CYPA. In terms of processing, sumoylated.

Its subcellular location is the nucleus. The protein resides in the cytoplasm. Involved in the packaging of pre-mRNA into hnRNP particles, transport of poly(A) mRNA from the nucleus to the cytoplasm and modulation of splice site selection. Plays a role in the splicing of pyruvate kinase PKM by binding repressively to sequences flanking PKM exon 9, inhibiting exon 9 inclusion and resulting in exon 10 inclusion and production of the PKM M2 isoform. Binds to the IRES and thereby inhibits the translation of the apoptosis protease activating factor APAF1. May bind to specific miRNA hairpins. In Mus musculus (Mouse), this protein is Heterogeneous nuclear ribonucleoprotein A1 (Hnrnpa1).